A 327-amino-acid polypeptide reads, in one-letter code: MGTDYRNSGRGGRDGPGGRGPGNDRRDSGRSFGDRRPERPDFKRGDGGRGFGDRRGSGPPGGPDRGDRRGPRDGPGGRGGPGGPGGGFKGGAKTMVKPHPKYDGIFISHGRGDVLVTKSLAPGVAVYGEKRISVEGTESKIEYREWNPFRSKLGAAVRLNVLDMPIKPGAKVLYLGAASGTTVSHVSDIVGPTGAVYAVEFSQRSGRDLLEVAKARTNVYPIIADARHPYKYRMIVPEVDCIFSDVAQPDQARIVAENARYYLKANGGMLISIKASSVDSTLKPEAVFAREIETLREHDFKCKEQLDIGEFHRNHAIVVGRFRVKAA.

The tract at residues 1 to 96 is disordered; it reads MGTDYRNSGR…GFKGGAKTMV (96 aa). 8 positions are modified to asymmetric dimethylarginine: R10, R19, R44, R49, R55, R65, R69, and R78. The segment covering 22–56 has biased composition (basic and acidic residues); that stretch reads GNDRRDSGRSFGDRRPERPDFKRGDGGRGFGDRRG. The segment covering 73–90 has biased composition (gly residues); sequence DGPGGRGGPGGPGGGFKG. Residues 181 to 182, 200 to 201, 225 to 226, and 245 to 248 contribute to the S-adenosyl-L-methionine site; these read TT, EF, DA, and DVAQ.

The protein belongs to the methyltransferase superfamily. Fibrillarin family. As to quaternary structure, component of box C/D small nucleolar ribonucleoprotein (snoRNP) particles. It is associated with the U3, U8 and U13 small nuclear RNAs. Post-translationally, by homology to other fibrillarins, some or all of the N-terminal domain arginines are modified to asymmetric dimethylarginine (DMA).

It localises to the nucleus. The protein localises to the nucleolus. The enzyme catalyses L-glutaminyl-[histone H2A] + S-adenosyl-L-methionine = N(5)-methyl-L-glutaminyl-[histone H2A] + S-adenosyl-L-homocysteine + H(+). Functionally, S-adenosyl-L-methionine-dependent methyltransferase that has the ability to methylate both RNAs and proteins. Involved in pre-rRNA processing. Utilizes the methyl donor S-adenosyl-L-methionine to catalyze the site-specific 2'-hydroxyl methylation of ribose moieties in pre-ribosomal RNA. Site specificity is provided by a guide RNA that base pairs with the substrate. Methylation occurs at a characteristic distance from the sequence involved in base pairing with the guide RNA. Also acts as a protein methyltransferase by mediating methylation of 'Gln-105' of histone H2A (H2AQ105me), a modification that impairs binding of the FACT complex and is specifically present at 35S ribosomal DNA locus. This chain is rRNA 2'-O-methyltransferase fibrillarin, found in Giardia intestinalis (Giardia lamblia).